The sequence spans 366 residues: Ferredoxin--NADP reductase (366 aa).

The FAD site is built by Asp51, Gln59, Tyr64, Val104, Phe139, Asp308, and Thr349.

The protein belongs to the ferredoxin--NADP reductase type 2 family. Homodimer. It depends on FAD as a cofactor.

It catalyses the reaction 2 reduced [2Fe-2S]-[ferredoxin] + NADP(+) + H(+) = 2 oxidized [2Fe-2S]-[ferredoxin] + NADPH. The sequence is that of Ferredoxin--NADP reductase from Methylibium petroleiphilum (strain ATCC BAA-1232 / LMG 22953 / PM1).